A 379-amino-acid polypeptide reads, in one-letter code: Cytochrome b (379 aa).

4 helical membrane passes run 33 to 53 (FGSL…FLAM), 77 to 98 (WLIR…FIHV), 113 to 133 (WNIG…GYVL), and 178 to 198 (FFAF…VHLL). His-83 and His-97 together coordinate heme b. 2 residues coordinate heme b: His-182 and His-196. Residue His-201 coordinates a ubiquinone. Transmembrane regions (helical) follow at residues 226 to 246 (IKDL…ALFF), 288 to 308 (LGGV…PLLN), 320 to 340 (ITQT…WIGG), and 347 to 367 (FTMI…ILXP).

The protein belongs to the cytochrome b family. The cytochrome bc1 complex contains 11 subunits: 3 respiratory subunits (MT-CYB, CYC1 and UQCRFS1), 2 core proteins (UQCRC1 and UQCRC2) and 6 low-molecular weight proteins (UQCRH/QCR6, UQCRB/QCR7, UQCRQ/QCR8, UQCR10/QCR9, UQCR11/QCR10 and a cleavage product of UQCRFS1). This cytochrome bc1 complex then forms a dimer. Heme b serves as cofactor.

The protein localises to the mitochondrion inner membrane. Functionally, component of the ubiquinol-cytochrome c reductase complex (complex III or cytochrome b-c1 complex) that is part of the mitochondrial respiratory chain. The b-c1 complex mediates electron transfer from ubiquinol to cytochrome c. Contributes to the generation of a proton gradient across the mitochondrial membrane that is then used for ATP synthesis. The polypeptide is Cytochrome b (MT-CYB) (Akodon toba (Chaco grass mouse)).